The primary structure comprises 1119 residues: Agglutinin-like protein 3 (1119 aa).

The N-terminal stretch at Met-1–Ala-17 is a signal peptide. Disulfide bonds link Cys-73–Cys-150, Cys-96–Cys-112, Cys-205–Cys-298, and Cys-227–Cys-256. 3 ALS repeats span residues Thr-365 to Pro-396, Thr-401 to Pro-432, and Val-438 to Pro-469. Asn-471 is a glycosylation site (N-linked (GlcNAc...) asparagine). 2 ALS repeats span residues Val-474 to Pro-505 and Val-510 to Pro-541. A glycan (N-linked (GlcNAc...) asparagine) is linked at Asn-543. Residues Val-546–Pro-577 form an ALS 6 repeat. Asn-579 is a glycosylation site (N-linked (GlcNAc...) asparagine). 2 ALS repeats span residues Val-582–Pro-613 and Val-618–Pro-649. Asn-651 is a glycosylation site (N-linked (GlcNAc...) asparagine). An ALS 9 repeat occupies Val-654–Pro-685. Asn-687 carries N-linked (GlcNAc...) asparagine glycosylation. The stretch at Val-690–Pro-721 is one ALS 10 repeat. Asn-723 is a glycosylation site (N-linked (GlcNAc...) asparagine). One copy of the ALS 11 repeat lies at Val-726–Pro-757. Asn-759 is a glycosylation site (N-linked (GlcNAc...) asparagine). 2 ALS repeats span residues Val-762–Pro-793 and Val-798–Tyr-827. Asn-845 is a glycosylation site (N-linked (GlcNAc...) asparagine). The interval Met-892 to Thr-1077 is disordered. Over residues Thr-894 to Thr-929 the composition is skewed to low complexity. Composition is skewed to polar residues over residues Ala-930–Ser-941 and Thr-947–Ser-965. Residues Thr-974 to Thr-983 show a composition bias toward low complexity. An N-linked (GlcNAc...) asparagine glycan is attached at Asn-987. Composition is skewed to low complexity over residues Ala-998–Val-1022 and Ala-1035–Ala-1048. Residues Asn-1050 and Asn-1061 are each glycosylated (N-linked (GlcNAc...) asparagine). Over residues Thr-1057–Thr-1077 the composition is skewed to low complexity. Ser-1098 carries the GPI-anchor amidated serine lipid modification. The propeptide at Gly-1099–Ile-1119 is removed in mature form.

It belongs to the ALS family. The GPI-anchor is attached to the protein in the endoplasmic reticulum and serves to target the protein to the cell surface. There, the glucosamine-inositol phospholipid moiety is cleaved off and the GPI-modified mannoprotein is covalently attached via its lipidless GPI glycan remnant to the 1,6-beta-glucan of the outer cell wall layer.

Its subcellular location is the cell membrane. It is found in the secreted. It localises to the cell wall. In terms of biological role, cell surface adhesion protein which mediates both yeast-to-host tissue adherence and yeast aggregation. Plays an important role in the biofilm formation and pathogenesis of C.albicans infections. Necessary for C.albicans to bind to N-cadherin on endothelial cells and E-cadherin on oral epithelial cells and subsequent endocytosis by these cells. During disseminated infection, mediates initial trafficking to the brain and renal cortex and contributes to fungal persistence in the kidneys. In Candida albicans (Yeast), this protein is Agglutinin-like protein 3 (ALS3).